A 598-amino-acid chain; its full sequence is MDNKKIRNFAIIAHIDHGKSTLADRILEFTNTVSKRDLKEQHLDSMDLEKERGITIKLNAVQIRYNSYIFHLIDTPGHVDFTYEVSRSLAATEGALLLVDASQGIQAQTLANVYLALENNLEIIPIINKIDLPSANVDKVKAEIENTIGISAENAILISAKNGIGIEKVLEAIVNLIPPPQASDEKDPLKALVFDSYFDIYRGVIIFIRVVTGKISVGDTFKFMANNLKFSVIELGISSPNQVKKEALFAGEVGWVAASIRNAKDVEVGDTITLVENPAKSPLPGYKKLVPVMYTGFYPVDSQQYNLLKDSLEKISLSDSSIIYEPESSKALGFGFRIGFLGLLHMEILQERLEREFNLSIIATAPSVEFQITRTNGQVQIISNPSLFPEPNFISEIREPYILAKIFLPEEFLGQIMGLCQDKRGIYVDLEYIDDFRRRLIYKLPLVEVIFDFFDRLKSLSKGYASFEYEVIDYQVSKLQKLDILLNGQKIDALSMIVHKDFAYPKARDLTQKLKEIIPRHSFEVPVQAVIGSKVIARETIKAYRKDVTAKLYGGDVTRRKKLLEKQKAGKKRMKSFGVVDVPQEAFLAILKTNVSEK.

Residues 4-181 form the tr-type G domain; it reads KKIRNFAIIA…AIVNLIPPPQ (178 aa). GTP is bound by residues 16–21 and 128–131; these read DHGKST and NKID.

This sequence belongs to the TRAFAC class translation factor GTPase superfamily. Classic translation factor GTPase family. LepA subfamily.

The protein resides in the cell membrane. The enzyme catalyses GTP + H2O = GDP + phosphate + H(+). Its function is as follows. Required for accurate and efficient protein synthesis under certain stress conditions. May act as a fidelity factor of the translation reaction, by catalyzing a one-codon backward translocation of tRNAs on improperly translocated ribosomes. Back-translocation proceeds from a post-translocation (POST) complex to a pre-translocation (PRE) complex, thus giving elongation factor G a second chance to translocate the tRNAs correctly. Binds to ribosomes in a GTP-dependent manner. The chain is Elongation factor 4 from Mesomycoplasma hyopneumoniae (strain J / ATCC 25934 / NCTC 10110) (Mycoplasma hyopneumoniae).